Consider the following 41-residue polypeptide: Photosystem II reaction center protein L (41 aa).

A helical transmembrane segment spans residues 20–40; it reads SLYWGLLLIFVLAVPFSNYFF.

Belongs to the PsbL family. As to quaternary structure, PSII is composed of 1 copy each of membrane proteins PsbA, PsbB, PsbC, PsbD, PsbE, PsbF, PsbH, PsbI, PsbJ, PsbK, PsbL, PsbM, PsbT, PsbX, PsbY, PsbZ, Psb30/Ycf12, at least 3 peripheral proteins of the oxygen-evolving complex and a large number of cofactors. It forms dimeric complexes.

It localises to the plastid. The protein localises to the chloroplast thylakoid membrane. In terms of biological role, one of the components of the core complex of photosystem II (PSII). PSII is a light-driven water:plastoquinone oxidoreductase that uses light energy to abstract electrons from H(2)O, generating O(2) and a proton gradient subsequently used for ATP formation. It consists of a core antenna complex that captures photons, and an electron transfer chain that converts photonic excitation into a charge separation. This subunit is found at the monomer-monomer interface and is required for correct PSII assembly and/or dimerization. In Pinus koraiensis (Korean pine), this protein is Photosystem II reaction center protein L.